A 652-amino-acid chain; its full sequence is Forkhead box protein O1 (652 aa).

Disordered stretches follow at residues 1 to 62 (MAEA…ASAS) and 112 to 154 (VHPA…SSRR). Residue T24 is modified to Phosphothreonine; by PKB/AKT1 or PKB/AKT2 and SGK1. Positions 35–62 (SNSTTSSPAPSGGAAANPDAAASLASAS) are enriched in low complexity. Positions 114-133 (PAPPQPPPTGPLSQPPPVPP) are enriched in pro residues. Residues 134–146 (SAAAAAGPLAGQP) show a composition bias toward low complexity. Positions 156–232 (AWGNLSYADL…VQNEGTGKSS (77 aa)) form a DNA-binding region, fork-head. 2 DNA-binding regions span residues 208–215 (NSIRHNLS) and 231–234 (SSWW). S209 carries the phosphoserine; by STK4/MST1 modification. A phosphoserine mark is found at S215, S231, and S232. 2 disordered regions span residues 231-342 (SSWW…DVHS) and 383-410 (SLTV…PNTS). N6-acetyllysine is present on residues K242 and K245. At S246 the chain carries Phosphoserine; by CDK1. An omega-N-methylarginine; by PRMT1 mark is found at R248 and R250. The Nuclear localization signal signature appears at 248-250 (RRR). S253 is subject to Phosphoserine; by PKB/AKT1 and SGK1. N6-acetyllysine is present on residues K259, K262, and K271. Positions 261 to 272 (AKSRGRAAKKKA) are enriched in basic residues. The tract at residues 280-562 (GPGDSPGSQF…TPVKTPLQVP (283 aa)) is sufficient for interaction with NLK. S284 and S295 each carry phosphoserine. Over residues 306–323 (NWSTFRPRTSSNASTISG) the composition is skewed to polar residues. S316 carries the post-translational modification Phosphoserine; by PKB/AKT1 or PKB/AKT2. The residue at position 319 (S319) is a Phosphoserine; by CK1 and SGK1. S322 bears the Phosphoserine; by CK1 mark. S326 is modified (phosphoserine). Position 330 is a phosphothreonine (T330). Positions 360 to 456 (SEISNPENME…GGLNQYNCAP (97 aa)) are required for interaction with RUNX2. The segment covering 392–401 (PGSMMQQTPC) has biased composition (polar residues). K420 carries the post-translational modification N6-acetyllysine. Residues 459–463 (LKELL) carry the Required for interaction with SIRT1 motif.

As to quaternary structure, interacts with EP300 and CREBBP; the interactions acetylate FOXO1. Interacts with the 14-3-3 proteins, YWHAG and YWHAZ; the interactions require insulin-stimulated phosphorylation on Thr-24, promote nuclear exit and loss of transcriptional activity. Interacts with SKP2; the interaction ubiquitinates FOXO1 leading to its proteasomal degradation. Interacts with PMRT1; methylates FOXO1, prevents PKB/AKT1 phosphorylation and retains FOXO1 in the nucleus. Interacts (via an N-terminal domain) with FCOR; the interaction is direct, occurs in a forskolin-independent manner and prevents SIRT1 binding to FOXO1. Interacts (via the C-terminal half) with ATF4 (via its DNA-binding domain); the interaction occurs in osteoblasts, regulates glucose homeostasis via suppression of beta-cell proliferation and subsequent decrease in insulin production. Interacts with RUNX2; the interaction inhibits RUNX2 transcriptional activity and mediates the IGF1/insulin-dependent BGLAP expression in osteoblasts. Interacts with PPP2R1A; the interaction regulates the dephosphorylation of FOXO1 at Thr-24 and Ser-253 leading to its nuclear import. Binds to CDK1. Interacts with LRPPRC. Interacts with RUNX2; the interaction inhibits RUNX2 transcriptional activity and mediates the IGF1/insulin-dependent BGLAP expression in osteoblasts. Interacts with NLK. Interacts with SIRT1; the interaction results in the deacetylation of FOXO1 leading to activation of FOXO1-mediated transcription of genes involved in DNA repair and stress resistance. The interaction requires the presence of KRIT1 and is inhibited by FCOR. Interacts with SIRT2; the interaction is disrupted in response to oxidative stress or serum deprivation, leading to increased level of acetylated FOXO1, which promotes stress-induced autophagy by stimulating E1-like activating enzyme ATG7. Interacts (acetylated form) with ATG7; the interaction is increased in response to oxidative stress or serum deprivation and promotes the autophagic process leading to cell death. Interacts (acetylated form) with PPARG. Interacts with XBP1 isoform 2; this interaction is direct and leads to FOXO1 ubiquitination and degradation via the proteasome pathway. Interacts (via the Fork-head domain) with CEBPA; the interaction increases when FOXO1 is deacetylated. Interacts with WDFY2. Forms a complex with WDFY2 and AKT1. Interacts with CRY1. Interacts with PPIA/CYPA; the interaction promotes FOXO1 dephosphorylation, nuclear accumulation and transcriptional activity. Interacts with TOX4; FOXO1 is required for full induction of TOX4-dependent activity and the interaction is inhibited by insulin. Interacts (when phosphorylated on Ser-253) with STUB1/CHIP. Post-translationally, phosphorylation by NLK promotes nuclear export and inhibits the transcriptional activity. In response to growth factors, phosphorylation on Thr-24, Ser-253 and Ser-319 by PKB/AKT1 promotes nuclear export and inactivation of transactivational activity. Phosphorylation on Thr-24 is required for binding 14-3-3 proteins. Phosphorylation of Ser-253 decreases DNA-binding activity and promotes the phosphorylation of Thr-24 and Ser-316, permitting phosphorylation of Ser-319 and Ser-322, probably by CDK1, leading to nuclear exclusion and loss of function. Stress signals, such as response to oxygen or nitric oxide, attenuate the PKB/AKT1-mediated phosphorylation leading to nuclear retention. Phosphorylation of Ser-326 is independent of IGF1 and leads to reduced function. Dephosphorylated on Thr-24 and Ser-253 by PP2A in beta-cells under oxidative stress leading to nuclear retention. Phosphorylation of Ser-246 by CDK1 disrupts binding of 14-3-3 proteins leading to nuclear accumulation and has no effect on DNA-binding nor transcriptional activity. Phosphorylation by STK4/MST1 on Ser-209, upon oxidative stress, inhibits binding to 14-3-3 proteins and nuclear export. PPIA/CYPA promotes its dephosphorylation on Ser-253. In terms of processing, ubiquitinated by SKP2. Ubiquitinated, leading to proteasomal degradation. Ubiquitinated by STUB1/CHIP; when Ser-253 is phosphorylated. Methylation inhibits PKB/AKT1-mediated phosphorylation at Ser-253, promoting nuclear retention and increasing the transcriptional activity and cell death. Methylation increased by oxidative stress. Post-translationally, acetylation at Lys-259 and Lys-271 are necessary for autophagic cell death induction. Deacetylated by SIRT2 in response to oxidative stress or serum deprivation, thereby negatively regulating FOXO1-mediated autophagic cell death. Once in the nucleus, acetylated by CREBBP/EP300. Acetylation diminishes the interaction with target DNA and attenuates the transcriptional activity. It increases the phosphorylation at Ser-253, and is required for the transcriptional inhibition by FCOR. Deacetylation by SIRT1 results in reactivation of the transcriptional activity. Acetylation of FOXO1 diminishes its binding to PPARG in adipocytes. Deacetylated by SIRT2; deacetylation of FOXO1 directly increases its repressive binding to PPARG and inhibits adipocyte differentiation. Oxidative stress by hydrogen peroxide treatment appears to promote deacetylation and uncoupling of insulin-induced phosphorylation. By contrast, resveratrol acts independently of acetylation. Acetylated at Lys-420, promoting its localization to the nucleus and transcription factor activity. Deacetylation at Lys-420 by SIRT6, promotes its translocation into the cytoplasm, preventing its transcription factor activity. Deacetylation and subsequent inhibition by SIRT6 has different effects depending on cell types: it inhibits gluconeogenesis in hepatocytes, promotes glucose sensing in pancreatic beta-cells and regulates lipid catabolism in brown adipocytes. In terms of tissue distribution, expressed in liver, white and brown adipose tissues (at protein level).

It is found in the cytoplasm. It localises to the nucleus. Transcription factor that is the main target of insulin signaling and regulates metabolic homeostasis in response to oxidative stress. Binds to the insulin response element (IRE) with consensus sequence 5'-TT[G/A]TTTTG-3' and the related Daf-16 family binding element (DBE) with consensus sequence 5'-TT[G/A]TTTAC-3'. Activity suppressed by insulin. Main regulator of redox balance and osteoblast numbers and controls bone mass. Orchestrates the endocrine function of the skeleton in regulating glucose metabolism. Also acts as a key regulator of chondrogenic commitment of skeletal progenitor cells in response to lipid availability: when lipids levels are low, translocates to the nucleus and promotes expression of SOX9, which induces chondrogenic commitment and suppresses fatty acid oxidation. Acts synergistically with ATF4 to suppress osteocalcin/BGLAP activity, increasing glucose levels and triggering glucose intolerance and insulin insensitivity. Also suppresses the transcriptional activity of RUNX2, an upstream activator of osteocalcin/BGLAP. Acts as an inhibitor of glucose sensing in pancreatic beta cells by acting as a transcription repressor and suppressing expression of PDX1. In hepatocytes, promotes gluconeogenesis by acting together with PPARGC1A and CEBPA to activate the expression of genes such as IGFBP1, G6PC1 and PCK1. Also promotes gluconeogenesis by directly promoting expression of PPARGC1A and G6PC1. Important regulator of cell death acting downstream of CDK1, PKB/AKT1 and STK4/MST1. Promotes neural cell death. Mediates insulin action on adipose tissue. Regulates the expression of adipogenic genes such as PPARG during preadipocyte differentiation and, adipocyte size and adipose tissue-specific gene expression in response to excessive calorie intake. Regulates the transcriptional activity of GADD45A and repair of nitric oxide-damaged DNA in beta-cells. Required for the autophagic cell death induction in response to starvation or oxidative stress in a transcription-independent manner. Mediates the function of MLIP in cardiomyocytes hypertrophy and cardiac remodeling. Positive regulator of apoptosis in cardiac smooth muscle cells as a result of its transcriptional activation of pro-apoptotic genes. Regulates endothelial cell (EC) viability and apoptosis in a PPIA/CYPA-dependent manner via transcription of CCL2 and BCL2L11 which are involved in EC chemotaxis and apoptosis. This chain is Forkhead box protein O1 (Foxo1), found in Mus musculus (Mouse).